We begin with the raw amino-acid sequence, 796 residues long: Probable phosphoketolase 2 (796 aa).

The protein belongs to the XFP family. The cofactor is thiamine diphosphate.

This chain is Probable phosphoketolase 2, found in Lactiplantibacillus plantarum (strain ATCC BAA-793 / NCIMB 8826 / WCFS1) (Lactobacillus plantarum).